The chain runs to 193 residues: dTTP/UTP pyrophosphatase (193 aa).

The active-site Proton acceptor is Asp-71.

This sequence belongs to the Maf family. YhdE subfamily. A divalent metal cation is required as a cofactor.

The protein resides in the cytoplasm. The enzyme catalyses dTTP + H2O = dTMP + diphosphate + H(+). It carries out the reaction UTP + H2O = UMP + diphosphate + H(+). Functionally, nucleoside triphosphate pyrophosphatase that hydrolyzes dTTP and UTP. May have a dual role in cell division arrest and in preventing the incorporation of modified nucleotides into cellular nucleic acids. This Geobacter sp. (strain M21) protein is dTTP/UTP pyrophosphatase.